A 291-amino-acid chain; its full sequence is Early E4 34 kDa protein (291 aa).

It belongs to the adenoviridae E4 30 to 34 kDa protein family. As to quaternary structure, interacts with E1B-55k.

Its subcellular location is the host nucleus. The protein localises to the host cytoplasm. Plays a major role to prevent cellular inhibition of viral genome replication by nuclear bodies. Assembles an SCF-like E3 ubiquitin ligase complex based on the cellular proteins ELOB, ELOC, CUL5 and RBX1, in cooperation with viral E1B-55K. This viral RING-type ligase ubiquitinates cellular substrates prior to proteasomal degradation: p53/TP53, LIG4, MRE11-RAD50-NBS1 (MRN) complex, ITGA3, DAXX and BLM. This chain is Early E4 34 kDa protein, found in Homo sapiens (Human).